We begin with the raw amino-acid sequence, 376 residues long: Glucose-1-phosphate adenylyltransferase (376 aa).

Alpha-D-glucose 1-phosphate-binding positions include tyrosine 101, glycine 166, 181–182 (EK), and serine 192.

This sequence belongs to the bacterial/plant glucose-1-phosphate adenylyltransferase family. In terms of assembly, homotetramer.

The enzyme catalyses alpha-D-glucose 1-phosphate + ATP + H(+) = ADP-alpha-D-glucose + diphosphate. It participates in glycan biosynthesis; glycogen biosynthesis. Functionally, involved in the biosynthesis of ADP-glucose, a building block required for the elongation reactions to produce glycogen. Catalyzes the reaction between ATP and alpha-D-glucose 1-phosphate (G1P) to produce pyrophosphate and ADP-Glc. In Bacillus cereus (strain Q1), this protein is Glucose-1-phosphate adenylyltransferase.